A 312-amino-acid chain; its full sequence is Protoheme IX farnesyltransferase (312 aa).

8 helical membrane-spanning segments follow: residues 34-54 (LVIFTALIGLLIAPGHFHPVL), 56-76 (ITSLLCIAVGAGASGALNMAL), 119-139 (ILVNWYAGALLAFTIFFYVVI), 152-172 (IVIGGAAGALPPVVAWVAATG), 179-199 (LLLFLIIFFWTPPHFWALALF), 225-245 (ILLYTILLVAIAAAPWPLGYF), 248-268 (VYGVVSLALGAGMLWFAIEVF), and 283-303 (LFAFSILYLFALFATLGLEAV).

The protein belongs to the UbiA prenyltransferase family. Protoheme IX farnesyltransferase subfamily.

It localises to the cell inner membrane. The catalysed reaction is heme b + (2E,6E)-farnesyl diphosphate + H2O = Fe(II)-heme o + diphosphate. The protein operates within porphyrin-containing compound metabolism; heme O biosynthesis; heme O from protoheme: step 1/1. In terms of biological role, converts heme B (protoheme IX) to heme O by substitution of the vinyl group on carbon 2 of heme B porphyrin ring with a hydroxyethyl farnesyl side group. The polypeptide is Protoheme IX farnesyltransferase (Bradyrhizobium sp. (strain BTAi1 / ATCC BAA-1182)).